Reading from the N-terminus, the 364-residue chain is Anthranilate N-methyltransferase (364 aa).

Residues 1–20 form a disordered region; that stretch reads MGSLSESHTQYKHGVEVEED. S-adenosyl-L-methionine-binding residues include Gly-209, Asp-232, Met-253, and Lys-266. His-270 acts as the Proton acceptor in catalysis.

Belongs to the class I-like SAM-binding methyltransferase superfamily. Cation-independent O-methyltransferase family. COMT subfamily. Homodimer. As to expression, expressed in leaves, flowers, stems and roots. Detected in the vascular tissues in stems, in the rhizodermis or the endodermis of roots, in the inside of carpels, in the central vascular bundles of the syncarp ovary and in the secretory oil glands located around the outer ovary wall.

The catalysed reaction is anthranilate + S-adenosyl-L-methionine = N-methylanthranilate + S-adenosyl-L-homocysteine + H(+). Inhibited by Ca(2+), Co(2+), Fe(2+), Fe(3+), Cu(2+) or Zn(2+). No effect of Mg(2+). In terms of biological role, involved in the biosynthesis of acridine alkaloids. N-methyltransferase with a strict substrate specificity for anthranilate. No activity with anthranilic acid methyl ester, anthraniloyl CoA, 3- or 4-amino-benzoic acid, salicylic acid, catechol, eugenol, caffeic acid, quercetin, theobromin, theophyllin, putrescine and nicotinic acid among others. This is Anthranilate N-methyltransferase from Ruta graveolens (Common rue).